The sequence spans 556 residues: MKTDIEIAQSVELKPITEVVEKVGIGFDDLELYGKYKAKLSFDKINEVKDDKPGKLILVTAINPTPAGEGKSTISIGLADALNKIGKKTMIALREPSLGPVMGIKGGAAGGGYAQVLPMEDINLHFTGDMHAITTANNALSALLDNHIHQGNALGIDQRRIIWKRVVDLNDRALRHVTVGLGGPLNGIPREDGFDITVASEIMAILCLATDINDLKERLANIVVAYRYDRTPVYVRDLEIEGALTLILKDAIKPNLVQTIYGTPALVHGGPFANIAHGCNSVLATSTALRLADYTVTEAGFGADLGAEKFLDIKTPNLPTTPDAVVIVATLRALKMHGGVAKTDLSEENVQAVRDGFSNLKRHVENIRKFGIPVVVAINEFVADTEAEIAALKELCSEIKVPVELASVWANGADGGIDLANTVVDVVENGNADYKRLYSDDDSLEEKITKIVTEIYGGKSVVFEKKAKNQLKQFAEFGWDKLPVCMAKTQYSFSDNQFLLGAPEGFDITIREFVPKTGAGFIVALTGDVMTMPGLPKAPAALKMDVTEDGTAVGLF.

65 to 72 is a binding site for ATP; it reads TPAGEGKS.

This sequence belongs to the formate--tetrahydrofolate ligase family.

It carries out the reaction (6S)-5,6,7,8-tetrahydrofolate + formate + ATP = (6R)-10-formyltetrahydrofolate + ADP + phosphate. Its pathway is one-carbon metabolism; tetrahydrofolate interconversion. The chain is Formate--tetrahydrofolate ligase from Streptococcus thermophilus (strain ATCC BAA-250 / LMG 18311).